The following is a 665-amino-acid chain: Long chain acyl-CoA synthetase 3 (665 aa).

An ATP-binding site is contributed by 228-239 (IMYTSGTTGDPK). The fatty acid-binding stretch occupies residues 495–519 (DGWLHTGDVGEWQPDGAMKIIDRKK).

It belongs to the ATP-dependent AMP-binding enzyme family. Mg(2+) serves as cofactor.

It catalyses the reaction a long-chain fatty acid + ATP + CoA = a long-chain fatty acyl-CoA + AMP + diphosphate. It functions in the pathway lipid metabolism; fatty acid metabolism. Its function is as follows. Activation of long-chain fatty acids for both synthesis of cellular lipids, and degradation via beta-oxidation. Preferentially uses palmitate, palmitoleate, oleate and linoleate. In Arabidopsis thaliana (Mouse-ear cress), this protein is Long chain acyl-CoA synthetase 3 (LACS3).